Reading from the N-terminus, the 139-residue chain is Holo-[acyl-carrier-protein] synthase (139 aa).

Asp8 and Glu61 together coordinate Mg(2+).

The protein belongs to the P-Pant transferase superfamily. AcpS family. Mg(2+) is required as a cofactor.

Its subcellular location is the cytoplasm. The catalysed reaction is apo-[ACP] + CoA = holo-[ACP] + adenosine 3',5'-bisphosphate + H(+). In terms of biological role, transfers the 4'-phosphopantetheine moiety from coenzyme A to a Ser of acyl-carrier-protein. In Bradyrhizobium diazoefficiens (strain JCM 10833 / BCRC 13528 / IAM 13628 / NBRC 14792 / USDA 110), this protein is Holo-[acyl-carrier-protein] synthase.